The primary structure comprises 164 residues: HTH-type transcriptional regulator IscR (164 aa).

Residues 2–131 (RLTSKGRYAV…NNITLAELVN (130 aa)) form the HTH rrf2-type domain. Positions 28–51 (LADISERQGISLSYLEQLFSRLRK) form a DNA-binding region, H-T-H motif. Residues Cys-92, Cys-98, and Cys-104 each contribute to the [2Fe-2S] cluster site. The tract at residues 143–164 (NNDTRRTANGRPQETINVNLRA) is disordered. Over residues 152–164 (GRPQETINVNLRA) the composition is skewed to polar residues.

Requires [2Fe-2S] cluster as cofactor.

Functionally, regulates the transcription of several operons and genes involved in the biogenesis of Fe-S clusters and Fe-S-containing proteins. This is HTH-type transcriptional regulator IscR from Yersinia pseudotuberculosis serotype O:1b (strain IP 31758).